A 66-amino-acid chain; its full sequence is DNA gyrase inhibitor YacG (66 aa).

Positions 9, 12, 28, and 32 each coordinate Zn(2+).

The protein belongs to the DNA gyrase inhibitor YacG family. Interacts with GyrB. Zn(2+) serves as cofactor.

Its function is as follows. Inhibits all the catalytic activities of DNA gyrase by preventing its interaction with DNA. Acts by binding directly to the C-terminal domain of GyrB, which probably disrupts DNA binding by the gyrase. This Pseudomonas fluorescens (strain SBW25) protein is DNA gyrase inhibitor YacG.